A 109-amino-acid polypeptide reads, in one-letter code: Nucleoid-associated protein SG0690 (109 aa).

The disordered stretch occupies residues 1-23 (MFGKGGMGNLMKQAQQMQEKMQR).

The protein belongs to the YbaB/EbfC family. Homodimer.

The protein resides in the cytoplasm. The protein localises to the nucleoid. Binds to DNA and alters its conformation. May be involved in regulation of gene expression, nucleoid organization and DNA protection. The polypeptide is Nucleoid-associated protein SG0690 (Sodalis glossinidius (strain morsitans)).